Here is a 92-residue protein sequence, read N- to C-terminus: Small ribosomal subunit protein uS19 (92 aa).

The protein belongs to the universal ribosomal protein uS19 family.

In terms of biological role, protein S19 forms a complex with S13 that binds strongly to the 16S ribosomal RNA. This chain is Small ribosomal subunit protein uS19, found in Rhizobium etli (strain CIAT 652).